The primary structure comprises 201 residues: Holliday junction branch migration complex subunit RuvA (201 aa).

Residues 1–63 are domain I; sequence MISHFSGTVS…EESLTLYGFV (63 aa). Residues 64–142 form a domain II region; that stretch reads EADDRDAFEL…ALAPRGASAS (79 aa). The tract at residues 143 to 153 is flexible linker; the sequence is GATHVAAPWRE. The domain III stretch occupies residues 153 to 201; the sequence is EQVAEGLVGLGWSTKDAEKAVDKVVALKEADPAMSIGNLMRAALRSLAR.

The protein belongs to the RuvA family. As to quaternary structure, homotetramer. Forms an RuvA(8)-RuvB(12)-Holliday junction (HJ) complex. HJ DNA is sandwiched between 2 RuvA tetramers; dsDNA enters through RuvA and exits via RuvB. An RuvB hexamer assembles on each DNA strand where it exits the tetramer. Each RuvB hexamer is contacted by two RuvA subunits (via domain III) on 2 adjacent RuvB subunits; this complex drives branch migration. In the full resolvosome a probable DNA-RuvA(4)-RuvB(12)-RuvC(2) complex forms which resolves the HJ.

Its subcellular location is the cytoplasm. In terms of biological role, the RuvA-RuvB-RuvC complex processes Holliday junction (HJ) DNA during genetic recombination and DNA repair, while the RuvA-RuvB complex plays an important role in the rescue of blocked DNA replication forks via replication fork reversal (RFR). RuvA specifically binds to HJ cruciform DNA, conferring on it an open structure. The RuvB hexamer acts as an ATP-dependent pump, pulling dsDNA into and through the RuvAB complex. HJ branch migration allows RuvC to scan DNA until it finds its consensus sequence, where it cleaves and resolves the cruciform DNA. The polypeptide is Holliday junction branch migration complex subunit RuvA (Cutibacterium acnes (strain DSM 16379 / KPA171202) (Propionibacterium acnes)).